A 231-amino-acid polypeptide reads, in one-letter code: Lipid A acyltransferase PagP (231 aa).

Positions 1–23 (MNKLTVRNFIVGLLIVFSLNSFS) are cleaved as a signal peptide. Residues 24 to 43 (SPPSISNSSSNSIDENSPIN) are compositionally biased toward low complexity. Positions 24 to 59 (SPPSISNSSSNSIDENSPINTFKISPDNQTSKKSDL) are disordered. Residues histidine 100, aspartate 145, and serine 146 contribute to the active site.

It belongs to the lipid A palmitoyltransferase family. In terms of assembly, homodimer.

Its subcellular location is the cell outer membrane. The enzyme catalyses a lipid A + a 1,2-diacyl-sn-glycero-3-phosphocholine = a hepta-acyl lipid A + a 2-acyl-sn-glycero-3-phosphocholine. It catalyses the reaction a lipid IVA + a 1,2-diacyl-sn-glycero-3-phosphocholine = a lipid IVB + a 2-acyl-sn-glycero-3-phosphocholine. The catalysed reaction is a lipid IIA + a 1,2-diacyl-sn-glycero-3-phosphocholine = a lipid IIB + a 2-acyl-sn-glycero-3-phosphocholine. In terms of biological role, transfers a fatty acid residue from the sn-1 position of a phospholipid to the N-linked hydroxyfatty acid chain on the proximal unit of lipid A or its precursors. In Legionella longbeachae serogroup 1 (strain NSW150), this protein is Lipid A acyltransferase PagP.